Here is an 85-residue protein sequence, read N- to C-terminus: Putative membrane protein insertion efficiency factor (85 aa).

It belongs to the UPF0161 family.

The protein localises to the cell inner membrane. In terms of biological role, could be involved in insertion of integral membrane proteins into the membrane. This is Putative membrane protein insertion efficiency factor from Shewanella sediminis (strain HAW-EB3).